A 753-amino-acid chain; its full sequence is Neuroendocrine convertase 1 (753 aa).

The first 27 residues, 1-27 (MEQRGWTLQCTAFAFFCVWCALNSVKA), serve as a signal peptide directing secretion. Residues 28-110 (KRQFVNEWAA…QQYEKERSKR (83 aa)) constitute a propeptide that is removed on maturation. The Peptidase S8 domain maps to 129 to 450 (QWYLQDTRMT…FGLLNAKALV (322 aa)). Catalysis depends on charge relay system residues Asp-167 and His-208. 2 cysteine pairs are disulfide-bonded: Cys-225–Cys-374 and Cys-317–Cys-347. Ser-382 serves as the catalytic Charge relay system. N-linked (GlcNAc...) asparagine glycosylation is present at Asn-401. Positions 460-597 (NVPEKKECVV…KLILHGTSSQ (138 aa)) constitute a P/Homo B domain. Cys-467 and Cys-494 form a disulfide bridge. Residues 633 to 651 (QKSLNGNLLVPKNSSSSNV) are compositionally biased toward polar residues. The disordered stretch occupies residues 633–663 (QKSLNGNLLVPKNSSSSNVEGRRDEQVQGTP). Residue Asn-645 is glycosylated (N-linked (GlcNAc...) asparagine).

The protein belongs to the peptidase S8 family. Furin subfamily. Ca(2+) is required as a cofactor.

The protein resides in the cytoplasmic vesicle. It is found in the secretory vesicle. It catalyses the reaction Release of protein hormones, neuropeptides and renin from their precursors, generally by hydrolysis of -Lys-Arg-|- bonds.. Involved in the processing of hormone and other protein precursors at sites comprised of pairs of basic amino acid residues. Substrates include POMC, renin, enkephalin, dynorphin, somatostatin, insulin and AGRP. This chain is Neuroendocrine convertase 1 (Pcsk1), found in Mus musculus (Mouse).